The sequence spans 815 residues: SNF1 protein kinase subunit beta-1 (815 aa).

Residues 1–11 are compositionally biased toward polar residues; that stretch reads MGNSPSTQDPS. 2 disordered regions span residues 1-88 and 117-148; these read MGNS…TIDK and SDDHDVGAPEEQVKSPSFLSPGPSMATVKQTK. Glycine 2 is lipidated: N-myristoyl glycine. Residues 12–31 are compositionally biased toward basic and acidic residues; that stretch reads HSTKKEHGHHFHDAFNKDRQ. Positions 32–42 are enriched in polar residues; it reads GSITSQLFNNR. Serine 33 is modified (phosphoserine). Composition is skewed to basic and acidic residues over residues 72–88 and 117–129; these read PSTDCDGRMSSDTTIDK and SDDHDVGAPEEQV. Phosphoserine occurs at positions 181, 198, 200, 206, 209, and 220. Disordered regions lie at residues 310–335, 363–389, and 410–444; these read SHANNNGNIENNTRNKGNAGGSNDDF, HQNKTKKAQNKKIRSASNSRRSSFASL, and PLHPIINDNESQYSAPQHREISHHSNSMSSMSSIS. Residues 313–326 are compositionally biased toward low complexity; sequence NNNGNIENNTRNKG. At serine 331 the chain carries Phosphoserine. Basic residues predominate over residues 363-376; the sequence is HQNKTKKAQNKKIR. Low complexity-rich tracts occupy residues 377 to 389 and 433 to 444; these read SASNSRRSSFASL and HSNSMSSMSSIS. The segment at 473–716 is kinase-interacting sequence (KIS); required for interaction with SNF1; the sequence is VSTDIASALK…LQQGGNIDAE (244 aa). A phosphoserine mark is found at serine 494 and serine 497. A disordered region spans residues 583–616; the sequence is TLDEELPKRPELKRFPSSSRKSSYYSAKGVERPS. A compositionally biased stretch (basic and acidic residues) spans 587–596; that stretch reads ELPKRPELKR. Positions 599-608 are enriched in low complexity; that stretch reads SSSRKSSYYS. Serine 643 bears the Phosphoserine mark. The segment at 724 to 804 is association with SNF1 kinase complex (ASC) domain; required for interaction with SNF4; the sequence is SRYPVPDLPI…FITQVVYAPC (81 aa).

It belongs to the 5'-AMP-activated protein kinase beta subunit family. Component of the SNF1 kinase complex, a heterotrimeric complex composed of the catalytic alpha subunit SNF1, one of the three related beta subunits SIP1, SIP2 or GAL83, and the regulatory gamma subunit SNF4. The beta subunit serves as a bridge between the catalytic and the regulatory subunit. Interacts (via KIS domain) with SNF1. Interacts (via ASC domain) with SNF4. Phosphorylated by SNF1 in vitro.

The protein localises to the cytoplasm. Its subcellular location is the vacuole membrane. Beta subunit of the SNF1 kinase complex, which is required for transcriptional, metabolic, and developmental adaptations in response to glucose limitation. Has a structural role, mediating heterotrimer formation, and a regulatory role, defining carbon source-regulated subcellular location and substrate specificity of the SNF1 kinase complex. Promotes the PKA-regulated relocalization of the SNF1 kinase complex to the vacuolar membrane in response to various types of carbon stress. This is SNF1 protein kinase subunit beta-1 (SIP1) from Saccharomyces cerevisiae (strain YJM789) (Baker's yeast).